The sequence spans 178 residues: Putative metal-dependent hydrolase GTNG_0529 (178 aa).

Positions 68, 161, and 165 each coordinate Zn(2+).

It belongs to the metal hydrolase YfiT family. In terms of assembly, homodimer. It depends on Zn(2+) as a cofactor.

The protein resides in the cytoplasm. Its function is as follows. Possible metal-dependent hydrolase. In Geobacillus thermodenitrificans (strain NG80-2), this protein is Putative metal-dependent hydrolase GTNG_0529.